The sequence spans 165 residues: Small ribosomal subunit protein eS10 (165 aa).

Position 12 is a phosphotyrosine (Y12). Positions 90-165 (VPATLRRSRP…FGRGRGQPPQ (76 aa)) are disordered. Positions 97–128 (SRPETGRPRPKGPEGERPARFTRGEADRDTYR) are enriched in basic and acidic residues. Residues K138 and K139 each participate in a glycyl lysine isopeptide (Lys-Gly) (interchain with G-Cter in ubiquitin) cross-link. S146 is subject to Phosphoserine. R153 bears the Omega-N-methylarginine mark. The span at 154–165 (GGFGRGRGQPPQ) shows a compositional bias: gly residues. Residues R158 and R160 each carry the symmetric dimethylarginine modification.

The protein belongs to the eukaryotic ribosomal protein eS10 family. Component of the small ribosomal subunit. The methylated form interacts with NPM1. Post-translationally, methylated by PRMT5. Methylation is necessary for its interaction with NPS1, its localization in the granular component (GC) region of the nucleolus, for the proper assembly of ribosomes, protein synthesis and optimal cell proliferation. In terms of processing, monoubiquitinated by ZNF598 when a ribosome has stalled during translation of poly(A) sequences, leading to preclude synthesis of a long poly-lysine tail and initiate the ribosome quality control (RQC) pathway to degrade the potentially detrimental aberrant nascent polypeptide. Deubiquitinated by OTUD3 and USP21, antagonizing ZNF598 activity. Deubiquitinated by OTUD1, antagonizing ZNF598 activity and stimulating formation of polysomes: deubiquitination by OTUD1 promotes stability and translation of a subset mRNAs with a high abundance of rare codons can limit the translation rate. Deubiquitinated by USP10.

The protein localises to the cytoplasm. It localises to the nucleus. It is found in the nucleolus. In terms of biological role, component of the 40S ribosomal subunit. The ribosome is a large ribonucleoprotein complex responsible for the synthesis of proteins in the cell. In Rattus norvegicus (Rat), this protein is Small ribosomal subunit protein eS10 (Rps10).